Consider the following 893-residue polypeptide: POU domain protein 2, isoform B (893 aa).

The segment at 586–668 (QMKQQQREDP…STPKPTSGLT (83 aa)) is disordered. Residues 602–617 (PLAKSPLRSPSLSPVP) are compositionally biased toward low complexity. Residues 623 to 646 (QQRTPPNSMTANSLGMSSAVMTPN) are compositionally biased toward polar residues. A compositionally biased stretch (low complexity) spans 647-665 (TPSMQQQPQLQQSTPKPTS). In terms of domain architecture, POU-specific spans 681–755 (EETTDLEELE…LLQKWLEDAD (75 aa)). Positions 786–845 (RRKKRTSIETTVRTTLEKAFLMNCKPTSEEISQLSERLNMDKEVIRVWFCNRRQKEKRIN) form a DNA-binding region, homeobox.

This sequence belongs to the POU transcription factor family. Class-2 subfamily. In terms of tissue distribution, initial expression in cellular blastoderm stage, then in ectodermal stripes during germband extension. Broad expression in the neuroectoderm followed by limitation to discrete subsets of CNS cells, and expression in specific PNS neurons and support cells.

Its subcellular location is the nucleus. DNA-binding regulatory protein implicated in early development. Involved in neuronal cell fate decision. May act as an octamer-dependent activator of transcription. Could also play an early role in specific ectodermal cells, and a subsequent role in the embryonic nervous system. The chain is POU domain protein 2, isoform B from Drosophila melanogaster (Fruit fly).